The chain runs to 303 residues: NAD kinase (303 aa).

The Proton acceptor role is filled by Asp-85. NAD(+) contacts are provided by residues 85 to 86, Arg-90, 159 to 160, Lys-187, Asp-189, Ala-224, and Gln-259; these read DG and ND.

It belongs to the NAD kinase family. It depends on a divalent metal cation as a cofactor.

The protein localises to the cytoplasm. The enzyme catalyses NAD(+) + ATP = ADP + NADP(+) + H(+). Functionally, involved in the regulation of the intracellular balance of NAD and NADP, and is a key enzyme in the biosynthesis of NADP. Catalyzes specifically the phosphorylation on 2'-hydroxyl of the adenosine moiety of NAD to yield NADP. This chain is NAD kinase, found in Bdellovibrio bacteriovorus (strain ATCC 15356 / DSM 50701 / NCIMB 9529 / HD100).